The chain runs to 121 residues: Small ribosomal subunit protein uS13 (121 aa).

Residues leucine 95–lysine 121 form a disordered region.

The protein belongs to the universal ribosomal protein uS13 family. As to quaternary structure, part of the 30S ribosomal subunit. Forms a loose heterodimer with protein S19. Forms two bridges to the 50S subunit in the 70S ribosome.

Functionally, located at the top of the head of the 30S subunit, it contacts several helices of the 16S rRNA. In the 70S ribosome it contacts the 23S rRNA (bridge B1a) and protein L5 of the 50S subunit (bridge B1b), connecting the 2 subunits; these bridges are implicated in subunit movement. Contacts the tRNAs in the A and P-sites. The polypeptide is Small ribosomal subunit protein uS13 (Polaromonas naphthalenivorans (strain CJ2)).